The sequence spans 185 residues: NOP protein chaperone 1 (185 aa).

The interval 1–40 (MEVHGKPKASPSCSSPTRDSSGVPVSKELLTAGSDGRGGI) is disordered. Low complexity predominate over residues 10–21 (SPSCSSPTRDSS). Phosphoserine is present on residues Ser34 and Ser66. The tract at residues 118–185 (FEMNQSDSKE…LDSPASKKKK (68 aa)) is disordered. Residues 143–152 (SESEDEDDSI) are compositionally biased toward acidic residues. At Ser178 the chain carries Phosphoserine.

As to quaternary structure, interacts with NOP58, RUVBL1 and RUVBL2; the interactions are direct and NOPCHAP1 bridges the association of NOP58 with RUVBL1:RUVBL2 even in absence of snoRNAs. The interactions with RUVBL1 and RUVBL2 are disrupted upon ATP binding.

The protein resides in the nucleus. Functionally, client-loading PAQosome/R2TP complex cofactor that selects NOP58 to promote box C/D small nucleolar ribonucleoprotein (snoRNP) assembly. Acts as a bridge between NOP58 and the R2TP complex via RUVBL1:RUVBL2. This chain is NOP protein chaperone 1, found in Homo sapiens (Human).